A 647-amino-acid polypeptide reads, in one-letter code: 5-aminolevulinate synthase, non-specific, mitochondrial (647 aa).

Residues 1–56 (METVVRRCPFLSRVPQAFLQKAGKSLLFYAQNCPKMMEIGAKPAPRALSTSAVLCQ) constitute a mitochondrion transit peptide. The interval 61–112 (TPPANEKDKAAKAEVQQAPDGSQQAPDGSQQTADGTQLPSGHPSLASSQGTG) is disordered. The span at 79 to 112 (PDGSQQAPDGSQQTADGTQLPSGHPSLASSQGTG) shows a compositional bias: polar residues. Residues R224, S341, and K360 each coordinate substrate. Pyridoxal 5'-phosphate-binding residues include S393, H421, and T449. K452 is an active-site residue. K452 bears the N6-(pyridoxal phosphate)lysine mark. 2 residues coordinate pyridoxal 5'-phosphate: T481 and T482. T569 lines the substrate pocket. P583 carries the post-translational modification Hydroxyproline.

The protein belongs to the class-II pyridoxal-phosphate-dependent aminotransferase family. In terms of assembly, homodimer. Interacts (hydroxylated form) with VHL. It depends on pyridoxal 5'-phosphate as a cofactor. In terms of processing, in normoxia, is hydroxylated at Pro-583, promoting interaction with VHL, initiating ubiquitination and subsequent degradation via the proteasome. Post-translationally, ubiquitinated; in normoxia following hydroxylation and interaction with VHL, leading to its subsequent degradation via the proteasome.

The protein localises to the mitochondrion inner membrane. The catalysed reaction is succinyl-CoA + glycine + H(+) = 5-aminolevulinate + CO2 + CoA. The protein operates within porphyrin-containing compound metabolism; protoporphyrin-IX biosynthesis; 5-aminolevulinate from glycine: step 1/1. In terms of biological role, catalyzes the pyridoxal 5'-phosphate (PLP)-dependent condensation of succinyl-CoA and glycine to form aminolevulinic acid (ALA), with CoA and CO2 as by-products. The chain is 5-aminolevulinate synthase, non-specific, mitochondrial (ALAS1) from Bos taurus (Bovine).